Consider the following 152-residue polypeptide: Ribonuclease H (152 aa).

Positions 1 to 142 (MKEVTIYTDG…CDELARAAIA (142 aa)) constitute an RNase H type-1 domain. Residues Asp-9, Glu-47, Asp-69, and Asp-134 each coordinate Mg(2+).

This sequence belongs to the RNase H family. In terms of assembly, monomer. Requires Mg(2+) as cofactor.

It is found in the cytoplasm. The enzyme catalyses Endonucleolytic cleavage to 5'-phosphomonoester.. In terms of biological role, endonuclease that specifically degrades the RNA of RNA-DNA hybrids. The polypeptide is Ribonuclease H (Moorella thermoacetica (strain ATCC 39073 / JCM 9320)).